The sequence spans 146 residues: Putative pre-16S rRNA nuclease (146 aa).

The protein belongs to the YqgF nuclease family.

It localises to the cytoplasm. In terms of biological role, could be a nuclease involved in processing of the 5'-end of pre-16S rRNA. The chain is Putative pre-16S rRNA nuclease from Pseudomonas syringae pv. tomato (strain ATCC BAA-871 / DC3000).